The sequence spans 389 residues: Protein WALLS ARE THIN 1 (389 aa).

10 consecutive transmembrane segments (helical) span residues 18–38, 49–69, 76–96, 111–131, 143–163, 198–218, 230–250, 266–286, 294–314, and 319–339; these read LQLH…HVVS, LVFP…FAYF, PAIT…GITA, TFAS…AALL, GISK…ITLY, WTLG…WLVF, LSVT…IAAF, LFTI…VQIW, VFVA…ASIA, and FYLG…FVLY. EamA domains lie at 32-161 and 210-339; these read AGFH…SVIT and LSWS…FVLY. S372 bears the Phosphoserine mark.

It belongs to the drug/metabolite transporter (DMT) superfamily. Plant drug/metabolite exporter (P-DME) (TC 2.A.7.4) family. In terms of tissue distribution, mostly expressed in stems and hypocotyls, also present in seedlings, root, leaves, flowers and siliques. Ubiquitous, mostly expressed in vascular tissues and secondary wall-forming cells, including developing xylem vessels and fibers.

The protein resides in the vacuole membrane. In terms of biological role, required for secondary wall formation in fibers, especially in short days conditions. Promotes indole metabolism and transport (e.g. tryptophan, neoglucobrassicin and auxin (indole-3-acetic acid)). May prevent salicylic-acid (SA) accumulation. This Arabidopsis thaliana (Mouse-ear cress) protein is Protein WALLS ARE THIN 1 (WAT1).